The sequence spans 56 residues: UPF0391 membrane protein HCH_04387 (56 aa).

The next 2 helical transmembrane spans lie at 6–26 (IVFFVVALVAGVLGFTGIAAA) and 30–50 (IAQILFVIFLVLFVISIIAGG).

Belongs to the UPF0391 family.

The protein localises to the cell membrane. The chain is UPF0391 membrane protein HCH_04387 from Hahella chejuensis (strain KCTC 2396).